We begin with the raw amino-acid sequence, 459 residues long: Adenylosuccinate synthetase isozyme 1 C (459 aa).

The tract at residues 1 to 31 (MSFSWSAKDHKSYTNPPSNPTQGLKRPRNDT) is disordered. Polar residues predominate over residues 13–22 (YTNPPSNPTQ). Residues 44–50 (GDEGKGK) and 72–74 (GHT) each bind GTP. Aspartate 45 serves as the catalytic Proton acceptor. Aspartate 45 and glycine 72 together coordinate Mg(2+). Residue aspartate 45 participates in substrate binding. Residues 45–48 (DEGK), 70–73 (NAGH), threonine 165, arginine 179, asparagine 258, threonine 273, and arginine 337 each bind IMP. Histidine 73 functions as the Proton donor in the catalytic mechanism. Residue 333–339 (VTTGRKR) participates in substrate binding. GTP contacts are provided by residues arginine 339, 365-367 (KLD), and 447-450 (GVGK).

This sequence belongs to the adenylosuccinate synthetase family. Homodimer. It depends on Mg(2+) as a cofactor.

It is found in the cytoplasm. It catalyses the reaction IMP + L-aspartate + GTP = N(6)-(1,2-dicarboxyethyl)-AMP + GDP + phosphate + 2 H(+). The protein operates within purine metabolism; AMP biosynthesis via de novo pathway; AMP from IMP: step 1/2. Component of the purine nucleotide cycle (PNC), which interconverts IMP and AMP to regulate the nucleotide levels in various tissues, and which contributes to glycolysis and ammoniagenesis. Catalyzes the first committed step in the biosynthesis of AMP from IMP. The chain is Adenylosuccinate synthetase isozyme 1 C (adss1c) from Salmo salar (Atlantic salmon).